A 379-amino-acid chain; its full sequence is Wnt inhibitory factor 1 (379 aa).

An N-terminal signal peptide occupies residues 1-28 (MARRRAFPAFALRLWSILPCLLLLRADA). The 140-residue stretch at 38 to 177 (LWIDAHQARV…PQNAIFFKTC (140 aa)) folds into the WIF domain. Asn-88 carries an N-linked (GlcNAc...) asparagine glycan. Cystine bridges form between Cys-140/Cys-177, Cys-182/Cys-192, Cys-186/Cys-198, Cys-200/Cys-209, Cys-214/Cys-224, Cys-218/Cys-230, and Cys-232/Cys-241. 5 consecutive EGF-like domains span residues 178–210 (QQAE…PHCE), 211–242 (KALC…VNCD), 243–271 (KANC…LEGE), 274–306 (ELSK…DLCS), and 307–338 (KPVC…RHCN). N-linked (GlcNAc...) asparagine glycosylation is present at Asn-245. 8 cysteine pairs are disulfide-bonded: Cys-246–Cys-256, Cys-250–Cys-262, Cys-278–Cys-288, Cys-282–Cys-294, Cys-296–Cys-305, Cys-310–Cys-320, Cys-314–Cys-326, and Cys-328–Cys-337. The disordered stretch occupies residues 348–379 (APRPAGAGLERHTPSLKKAEDRRDPPESNYIW). Positions 356-373 (LERHTPSLKKAEDRRDPP) are enriched in basic and acidic residues.

In terms of assembly, interacts with MYOC. In terms of tissue distribution, expression highest in heart and lung. Lower in brain and eye.

The protein resides in the secreted. Functionally, binds to WNT proteins and inhibits their activities. May be involved in mesoderm segmentation. This is Wnt inhibitory factor 1 (Wif1) from Mus musculus (Mouse).